A 711-amino-acid chain; its full sequence is Amino-acid racemase (711 aa).

The Cytoplasmic segment spans residues 1–14; it reads MTKNESYSGIDYFR. A helical transmembrane segment spans residues 15–35; sequence FIAALLIVAIHTSPLFSFSET. Residues 36-37 are Extracellular-facing; that stretch reads GN. A helical transmembrane segment spans residues 38–58; that stretch reads FIFTRIVAPVAVPFFFMTSGF. Over 59-78 the chain is Cytoplasmic; the sequence is FLISRYTCNAEKLGAFIKKT. A helical transmembrane segment spans residues 79-99; it reads TLIYGVAILLYIPINVYNGYF. At 100-117 the chain is on the extracellular side; it reads KMDNLLPNIIKDIVFDGT. Residues 118–138 form a helical membrane-spanning segment; it reads LYHLWYLPASIIGAAIAWYLV. Topologically, residues 139-146 are cytoplasmic; it reads KKVHYRKA. A helical membrane pass occupies residues 147 to 167; the sequence is FLIASILYIIGLFGDSYYGIV. Over 168 to 188 the chain is Extracellular; it reads KSVSCLNVFYNLIFQLTDYTR. A helical membrane pass occupies residues 189–209; the sequence is NGIFFAPIFFVLGGYISDSPN. Topologically, residues 210 to 241 are cytoplasmic; sequence RYRKKNYIRIYSLFCLMFGKTLTLQHFDIQKH. A helical membrane pass occupies residues 242 to 262; it reads DSMYVLLLPSVWCLFNLLLHF. Over 263-306 the chain is Extracellular; sequence RGKRRTGLRTISLDQLYHSSVYDCCNTIVCAELLHLQSLLVENS. The chain crosses the membrane as a helical span at residues 307–327; that stretch reads LVHYIAVCFASVVLAVVITAL. The Cytoplasmic segment spans residues 328-711; it reads LSSLKPKKAK…EHRLNIIRRA (384 aa). Residues 336–711 are racemase; the sequence is AKHTADTDRA…EHRLNIIRRA (376 aa). Lys-376 functions as the Proton acceptor in the catalytic mechanism. Lys-376 carries the post-translational modification N6-(pyridoxal phosphate)lysine. Arg-470 serves as a coordination point for substrate. Residue Tyr-602 is the Proton acceptor of the active site. Met-651 is a substrate binding site.

In the N-terminal section; belongs to the acyltransferase 3 family. This sequence in the C-terminal section; belongs to the alanine racemase family. Pyridoxal 5'-phosphate serves as cofactor.

It localises to the cell membrane. This is Amino-acid racemase (vanTG) from Enterococcus faecalis (Streptococcus faecalis).